A 1770-amino-acid chain; its full sequence is Transposon Ty2-LR1 Gag-Pol polyprotein (1770 aa).

3 stretches are compositionally biased toward polar residues: residues methionine 1–histidine 11, alanine 19–asparagine 39, and lysine 49–threonine 60. 2 disordered regions span residues methionine 1–glutamine 86 and glutamine 359–histidine 453. The interval glutamate 295–histidine 397 is RNA-binding. Positions threonine 369–arginine 381 are enriched in low complexity. Polar residues-rich tracts occupy residues isoleucine 399–valine 408 and glutamate 415–glutamine 435. The active-site For protease activity; shared with dimeric partner is the aspartate 457. The integrase-type zinc finger-like stretch occupies residues asparagine 579 to cysteine 636. The region spanning glutamate 656–proline 831 is the Integrase catalytic domain. Residues aspartate 667 and aspartate 732 each contribute to the Mg(2+) site. Disordered regions lie at residues glycine 1005–leucine 1038, glycine 1058–lysine 1135, leucine 1146–aspartate 1165, and histidine 1170–glutamate 1205. Polar residues-rich tracts occupy residues glutamate 1009–arginine 1024 and glutamine 1065–serine 1082. The segment covering leucine 1151 to aspartate 1165 has biased composition (basic and acidic residues). The Bipartite nuclear localization signal motif lies at lysine 1193–arginine 1227. The Reverse transcriptase Ty1/copia-type domain maps to asparagine 1353–glutamine 1491. The Mg(2+) site is built by aspartate 1361, aspartate 1442, aspartate 1443, aspartate 1625, glutamate 1667, and aspartate 1700. Positions aspartate 1625–lysine 1767 constitute an RNase H Ty1/copia-type domain.

As to quaternary structure, the capsid protein forms a homotrimer, from which the VLPs are assembled. The protease is a homodimer, whose active site consists of two apposed aspartic acid residues. Initially, virus-like particles (VLPs) are composed of the structural unprocessed proteins Gag and Gag-Pol, and also contain the host initiator methionine tRNA (tRNA(i)-Met) which serves as a primer for minus-strand DNA synthesis, and a dimer of genomic Ty RNA. Processing of the polyproteins occurs within the particle and proceeds by an ordered pathway, called maturation. First, the protease (PR) is released by autocatalytic cleavage of the Gag-Pol polyprotein, and this cleavage is a prerequisite for subsequent processing at the remaining sites to release the mature structural and catalytic proteins. Maturation takes place prior to the RT reaction and is required to produce transposition-competent VLPs.

Its subcellular location is the cytoplasm. The protein localises to the nucleus. The enzyme catalyses DNA(n) + a 2'-deoxyribonucleoside 5'-triphosphate = DNA(n+1) + diphosphate. It carries out the reaction Endonucleolytic cleavage to 5'-phosphomonoester.. Functionally, capsid protein (CA) is the structural component of the virus-like particle (VLP), forming the shell that encapsulates the retrotransposons dimeric RNA genome. The particles are assembled from trimer-clustered units and there are holes in the capsid shells that allow for the diffusion of macromolecules. CA also has nucleocapsid-like chaperone activity, promoting primer tRNA(i)-Met annealing to the multipartite primer-binding site (PBS), dimerization of Ty2 RNA and initiation of reverse transcription. The aspartyl protease (PR) mediates the proteolytic cleavages of the Gag and Gag-Pol polyproteins after assembly of the VLP. Its function is as follows. Reverse transcriptase/ribonuclease H (RT) is a multifunctional enzyme that catalyzes the conversion of the retro-elements RNA genome into dsDNA within the VLP. The enzyme displays a DNA polymerase activity that can copy either DNA or RNA templates, and a ribonuclease H (RNase H) activity that cleaves the RNA strand of RNA-DNA heteroduplexes during plus-strand synthesis and hydrolyzes RNA primers. The conversion leads to a linear dsDNA copy of the retrotransposon that includes long terminal repeats (LTRs) at both ends. In terms of biological role, integrase (IN) targets the VLP to the nucleus, where a subparticle preintegration complex (PIC) containing at least integrase and the newly synthesized dsDNA copy of the retrotransposon must transit the nuclear membrane. Once in the nucleus, integrase performs the integration of the dsDNA into the host genome. This Saccharomyces cerevisiae (strain ATCC 204508 / S288c) (Baker's yeast) protein is Transposon Ty2-LR1 Gag-Pol polyprotein (TY2B-LR1).